Reading from the N-terminus, the 313-residue chain is HPr kinase/phosphorylase (313 aa).

Residues His140 and Lys161 contribute to the active site. Gly155–Ser162 contributes to the ATP binding site. Ser162 provides a ligand contact to Mg(2+). The active-site Proton acceptor; for phosphorylation activity. Proton donor; for dephosphorylation activity is Asp179. Residues Ile203–Asn212 are important for the catalytic mechanism of both phosphorylation and dephosphorylation. Glu204 is a Mg(2+) binding site. Arg246 is an active-site residue. An important for the catalytic mechanism of dephosphorylation region spans residues Pro267–Arg272.

It belongs to the HPrK/P family. Homohexamer. Requires Mg(2+) as cofactor.

The catalysed reaction is [HPr protein]-L-serine + ATP = [HPr protein]-O-phospho-L-serine + ADP + H(+). It catalyses the reaction [HPr protein]-O-phospho-L-serine + phosphate + H(+) = [HPr protein]-L-serine + diphosphate. Functionally, catalyzes the ATP- as well as the pyrophosphate-dependent phosphorylation of a specific serine residue in HPr, a phosphocarrier protein of the phosphoenolpyruvate-dependent sugar phosphotransferase system (PTS). HprK/P also catalyzes the pyrophosphate-producing, inorganic phosphate-dependent dephosphorylation (phosphorolysis) of seryl-phosphorylated HPr (P-Ser-HPr). This Azoarcus sp. (strain BH72) protein is HPr kinase/phosphorylase.